We begin with the raw amino-acid sequence, 445 residues long: Phosphoglucosamine mutase (445 aa).

Serine 101 functions as the Phosphoserine intermediate in the catalytic mechanism. The Mg(2+) site is built by serine 101, aspartate 240, aspartate 242, and aspartate 244. A Phosphoserine modification is found at serine 101.

Belongs to the phosphohexose mutase family. The cofactor is Mg(2+). Activated by phosphorylation.

The enzyme catalyses alpha-D-glucosamine 1-phosphate = D-glucosamine 6-phosphate. Catalyzes the conversion of glucosamine-6-phosphate to glucosamine-1-phosphate. The sequence is that of Phosphoglucosamine mutase from Azotobacter vinelandii (strain DJ / ATCC BAA-1303).